Reading from the N-terminus, the 857-residue chain is Envelope glycoprotein B (857 aa).

Positions 1 to 21 (MTRRRVLSVVVLLAALACRLG) are cleaved as a signal peptide. At 22 to 732 (AQTPEQPAPP…SGFISFFKNP (711 aa)) the chain is on the virion surface side. Cystine bridges form between Cys51-Cys528, Cys68-Cys484, Cys141-Cys206, Cys295-Cys342, and Cys551-Cys588. Asn76 is a glycosylation site (N-linked (GlcNAc...) asparagine; by host). The tract at residues 108–114 (IYNGWYA) is involved in fusion and/or binding to host membrane. An N-linked (GlcNAc...) asparagine; by host glycan is attached at Asn163. The involved in fusion and/or binding to host membrane stretch occupies residues 192-200 (GWLIWTYRT). N-linked (GlcNAc...) asparagine; by host glycosylation is found at Asn290, Asn329, Asn348, and Asn395. The disordered stretch occupies residues 398 to 453 (ELTTPTSSPPSSPSPPAPSAARGSTPAAVLRRRRRDAGNATTPVPPTAPGKSLGTL). Positions 404 to 415 (SSPPSSPSPPAP) are enriched in pro residues. A compositionally biased stretch (low complexity) spans 416–425 (SAARGSTPAA). N-linked (GlcNAc...) asparagine; by host glycans are attached at residues Asn436, Asn563, and Asn629. The oligomerization stretch occupies residues 561-620 (FINDTKTYEGQLGTDNEIFLTKKMTEVCQATSQYYFQSGNEIHVYNDYHHFKTIELDGIA). Hydrophobic membrane proximal region stretches follow at residues 678 to 730 (LDNA…SFFK) and 709 to 729 (NLVSTVGGLFSSLVSGFISFF). The chain crosses the membrane as a helical span at residues 733–753 (FGGMLILVLVAGVVILVISLT). Topologically, residues 754–857 (RRTRQMSQQP…ALLGEAETEF (104 aa)) are intravirion. Residues 832 to 857 (FPGLRRRRYHDPETAAALLGEAETEF) form a disordered region. Positions 845 to 857 (TAAALLGEAETEF) are enriched in low complexity.

The protein belongs to the herpesviridae glycoprotein B family. Homotrimer; disulfide-linked. Binds to heparan sulfate proteoglycans. Interacts with gH/gL heterodimer. Post-translationally, a proteolytic cleavage by host furin generates two subunits that remain linked by disulfide bonds.

Its subcellular location is the virion membrane. It is found in the host cell membrane. The protein localises to the host endosome membrane. It localises to the host Golgi apparatus membrane. Its function is as follows. Envelope glycoprotein that forms spikes at the surface of virion envelope. Essential for the initial attachment to heparan sulfate moieties of the host cell surface proteoglycans. Involved in fusion of viral and cellular membranes leading to virus entry into the host cell. Following initial binding to its host receptors, membrane fusion is mediated by the fusion machinery composed at least of gB and the heterodimer gH/gL. May be involved in the fusion between the virion envelope and the outer nuclear membrane during virion egress. This is Envelope glycoprotein B from Epstein-Barr virus (strain B95-8) (HHV-4).